A 252-amino-acid chain; its full sequence is 2-succinyl-6-hydroxy-2,4-cyclohexadiene-1-carboxylate synthase (252 aa).

Belongs to the AB hydrolase superfamily. MenH family. As to quaternary structure, monomer.

The catalysed reaction is 5-enolpyruvoyl-6-hydroxy-2-succinyl-cyclohex-3-ene-1-carboxylate = (1R,6R)-6-hydroxy-2-succinyl-cyclohexa-2,4-diene-1-carboxylate + pyruvate. The protein operates within quinol/quinone metabolism; 1,4-dihydroxy-2-naphthoate biosynthesis; 1,4-dihydroxy-2-naphthoate from chorismate: step 3/7. It participates in quinol/quinone metabolism; menaquinone biosynthesis. Functionally, catalyzes a proton abstraction reaction that results in 2,5-elimination of pyruvate from 2-succinyl-5-enolpyruvyl-6-hydroxy-3-cyclohexene-1-carboxylate (SEPHCHC) and the formation of 2-succinyl-6-hydroxy-2,4-cyclohexadiene-1-carboxylate (SHCHC). This Shigella flexneri serotype 5b (strain 8401) protein is 2-succinyl-6-hydroxy-2,4-cyclohexadiene-1-carboxylate synthase.